Consider the following 662-residue polypeptide: Acetyl-coenzyme A synthetase (662 aa).

Residues 197 to 200 (RKGK) and Thr317 each bind CoA. Residues 393–395 (GEP), 417–422 (DTWWQT), Asp510, and Arg525 contribute to the ATP site. Ser533 contacts CoA. An ATP-binding site is contributed by Arg536. Positions 549 and 552 each coordinate Mg(2+). Position 623 is an N6-acetyllysine (Lys623).

This sequence belongs to the ATP-dependent AMP-binding enzyme family. The cofactor is Mg(2+). Acetylated. Deacetylation by the SIR2-homolog deacetylase activates the enzyme.

It carries out the reaction acetate + ATP + CoA = acetyl-CoA + AMP + diphosphate. Functionally, catalyzes the conversion of acetate into acetyl-CoA (AcCoA), an essential intermediate at the junction of anabolic and catabolic pathways. AcsA undergoes a two-step reaction. In the first half reaction, AcsA combines acetate with ATP to form acetyl-adenylate (AcAMP) intermediate. In the second half reaction, it can then transfer the acetyl group from AcAMP to the sulfhydryl group of CoA, forming the product AcCoA. The polypeptide is Acetyl-coenzyme A synthetase (Helicobacter pylori (strain G27)).